The sequence spans 522 residues: 2-isopropylmalate synthase (522 aa).

The region spanning 5–267 (VIIFDTTLRD…ETGINAKEIH (263 aa)) is the Pyruvate carboxyltransferase domain. 4 residues coordinate Mn(2+): D14, H202, H204, and N238. Residues 392–522 (QLQQLVVQSD…MQKNRELGGV (131 aa)) form a regulatory domain region.

Belongs to the alpha-IPM synthase/homocitrate synthase family. LeuA type 1 subfamily. As to quaternary structure, homodimer. It depends on Mn(2+) as a cofactor.

It is found in the cytoplasm. It carries out the reaction 3-methyl-2-oxobutanoate + acetyl-CoA + H2O = (2S)-2-isopropylmalate + CoA + H(+). It participates in amino-acid biosynthesis; L-leucine biosynthesis; L-leucine from 3-methyl-2-oxobutanoate: step 1/4. Its function is as follows. Catalyzes the condensation of the acetyl group of acetyl-CoA with 3-methyl-2-oxobutanoate (2-ketoisovalerate) to form 3-carboxy-3-hydroxy-4-methylpentanoate (2-isopropylmalate). This is 2-isopropylmalate synthase from Shewanella baltica (strain OS195).